Here is a 180-residue protein sequence, read N- to C-terminus: Cytokinin-beta-glucosidase 1 (180 aa).

In terms of biological role, hydrolyzes cytokinin glucosides thus liberating free cytokinins. The polypeptide is Cytokinin-beta-glucosidase 1 (ROLC1) (Linaria vulgaris (Toadflax)).